The sequence spans 71 residues: Small ribosomal subunit protein bS21 (71 aa).

Belongs to the bacterial ribosomal protein bS21 family.

The sequence is that of Small ribosomal subunit protein bS21 from Pseudoalteromonas atlantica (strain T6c / ATCC BAA-1087).